Here is a 398-residue protein sequence, read N- to C-terminus: Acetylornithine aminotransferase (398 aa).

F129 contributes to the pyridoxal 5'-phosphate binding site. Position 132 (R132) interacts with N(2)-acetyl-L-ornithine. 214-217 (DEVQ) lines the pyridoxal 5'-phosphate pocket. At K243 the chain carries N6-(pyridoxal phosphate)lysine. Residue S271 coordinates N(2)-acetyl-L-ornithine. T272 provides a ligand contact to pyridoxal 5'-phosphate.

This sequence belongs to the class-III pyridoxal-phosphate-dependent aminotransferase family. ArgD subfamily. Homodimer. The cofactor is pyridoxal 5'-phosphate.

The protein resides in the cytoplasm. It carries out the reaction N(2)-acetyl-L-ornithine + 2-oxoglutarate = N-acetyl-L-glutamate 5-semialdehyde + L-glutamate. Its pathway is amino-acid biosynthesis; L-arginine biosynthesis; N(2)-acetyl-L-ornithine from L-glutamate: step 4/4. The sequence is that of Acetylornithine aminotransferase from Neisseria meningitidis serogroup B (strain ATCC BAA-335 / MC58).